The chain runs to 497 residues: uncharacterized protein (497 aa).

Positions 12, 13, and 52 each coordinate Ca(2+). Residue cysteine 52 is the Nucleophile of the active site. The residue at position 52 (cysteine 52) is a 3-oxoalanine (Cys). Histidine 102 is an active-site residue. Residues aspartate 284 and histidine 285 each coordinate Ca(2+).

It belongs to the sulfatase family. Ca(2+) is required as a cofactor. Post-translationally, the conversion to 3-oxoalanine (also known as C-formylglycine, FGly), of a serine or cysteine residue in prokaryotes and of a cysteine residue in eukaryotes, is critical for catalytic activity.

This is an uncharacterized protein from Escherichia coli (strain K12).